Reading from the N-terminus, the 142-residue chain is Alpha-lactalbumin (142 aa).

The first 19 residues, methionine 1–alanine 19, serve as a signal peptide directing secretion. The 123-residue stretch at glutamate 20–leucine 142 folds into the C-type lysozyme domain. 4 disulfide bridges follow: cysteine 25/cysteine 139, cysteine 47/cysteine 130, cysteine 80/cysteine 96, and cysteine 92/cysteine 110. N-linked (GlcNAc...) asparagine glycans are attached at residues asparagine 64 and asparagine 93. 5 residues coordinate Ca(2+): lysine 98, aspartate 101, aspartate 103, aspartate 106, and aspartate 107.

It belongs to the glycosyl hydrolase 22 family. In terms of assembly, lactose synthase (LS) is a heterodimer of a catalytic component, beta1,4-galactosyltransferase (beta4Gal-T1) and a regulatory component, alpha-lactalbumin (LA). In terms of tissue distribution, mammary gland specific. Secreted in milk.

The protein resides in the secreted. Functionally, regulatory subunit of lactose synthase, changes the substrate specificity of galactosyltransferase in the mammary gland making glucose a good acceptor substrate for this enzyme. This enables LS to synthesize lactose, the major carbohydrate component of milk. In other tissues, galactosyltransferase transfers galactose onto the N-acetylglucosamine of the oligosaccharide chains in glycoproteins. This Bos mutus grunniens (Wild yak) protein is Alpha-lactalbumin (LALBA).